A 341-amino-acid chain; its full sequence is Large ribosomal subunit protein uL29m (341 aa).

Residues 44-74 (LARTRYTKPKPKPPRRSKVRAPTQTTHHDTD) are disordered. A compositionally biased stretch (basic residues) spans 48-62 (RYTKPKPKPPRRSKV).

It belongs to the universal ribosomal protein uL29 family. In terms of assembly, component of the mitochondrial large ribosomal subunit. Mature mitochondrial ribosomes consist of a small (37S) and a large (54S) subunit. The 37S subunit contains at least 33 different proteins and 1 molecule of RNA (15S). The 54S subunit contains at least 45 different proteins and 1 molecule of RNA (21S).

It is found in the mitochondrion. The chain is Large ribosomal subunit protein uL29m (MRPL4) from Eremothecium gossypii (strain ATCC 10895 / CBS 109.51 / FGSC 9923 / NRRL Y-1056) (Yeast).